The sequence spans 585 residues: Bifunctional purine biosynthesis protein ade10 (585 aa).

In terms of domain architecture, MGS-like spans 1–142; sequence MYALLSVYDK…KNHARVTILS (142 aa). Residues 30-33, 60-63, 97-98, and 121-122 each bind IMP; these read SGGT, RVKT, CN, and DI. Lysine 133 functions as the Proton donor/acceptor; for FAICAR cyclization activity in the catalytic mechanism. 5-amino-1-(5-phospho-beta-D-ribosyl)imidazole-4-carboxamide is bound by residues 200-201, histidine 260, glycine 308, aspartate 331, asparagine 423, and arginine 443; that span reads RY. Histidine 260 functions as the Proton acceptor; for AICAR formyltransferase activity in the catalytic mechanism. Residue isoleucine 444 participates in (6R)-10-formyltetrahydrofolate binding. Position 534 (phenylalanine 534) interacts with 5-amino-1-(5-phospho-beta-D-ribosyl)imidazole-4-carboxamide. Residues aspartate 539 and 558–559 contribute to the (6R)-10-formyltetrahydrofolate site; that span reads SV. Arginine 581 provides a ligand contact to 5-amino-1-(5-phospho-beta-D-ribosyl)imidazole-4-carboxamide.

The protein belongs to the PurH family. In terms of assembly, homodimer.

It is found in the cytoplasm. Its subcellular location is the cytosol. The enzyme catalyses (6R)-10-formyltetrahydrofolate + 5-amino-1-(5-phospho-beta-D-ribosyl)imidazole-4-carboxamide = 5-formamido-1-(5-phospho-D-ribosyl)imidazole-4-carboxamide + (6S)-5,6,7,8-tetrahydrofolate. The catalysed reaction is IMP + H2O = 5-formamido-1-(5-phospho-D-ribosyl)imidazole-4-carboxamide. Its pathway is purine metabolism; IMP biosynthesis via de novo pathway; 5-formamido-1-(5-phospho-D-ribosyl)imidazole-4-carboxamide from 5-amino-1-(5-phospho-D-ribosyl)imidazole-4-carboxamide (10-formyl THF route): step 1/1. The protein operates within purine metabolism; IMP biosynthesis via de novo pathway; IMP from 5-formamido-1-(5-phospho-D-ribosyl)imidazole-4-carboxamide: step 1/1. Functionally, bifunctional enzyme that catalyzes the last two steps of purine biosynthesis. Acts as a transformylase that incorporates a formyl group to the AMP analog AICAR (5-amino-1-(5-phospho-beta-D-ribosyl)imidazole-4-carboxamide) to produce the intermediate formyl-AICAR (FAICAR). Also catalyzes the cyclization of FAICAR to IMP. The polypeptide is Bifunctional purine biosynthesis protein ade10 (ade10) (Schizosaccharomyces pombe (strain 972 / ATCC 24843) (Fission yeast)).